Reading from the N-terminus, the 199-residue chain is Ribosome maturation factor RimP (199 aa).

The interval 165–199 is disordered; sequence AGNLPPQPEDDEDMLADFEIDESEDEEDPETGDVQ. The segment covering 172 to 199 has biased composition (acidic residues); that stretch reads PEDDEDMLADFEIDESEDEEDPETGDVQ.

This sequence belongs to the RimP family.

It localises to the cytoplasm. In terms of biological role, required for maturation of 30S ribosomal subunits. The protein is Ribosome maturation factor RimP of Hyphomonas neptunium (strain ATCC 15444).